A 366-amino-acid chain; its full sequence is MAAVNTVSSLPCSKAGAAVAGGAPRPSTCSVFYPPRCWSKRSSGNGVRAQASTTETTAAPAAEVTTKVEKVSKKQVDGVVTNKYRPKEPYTGRCLLNTRITGDDAPGETWHMVFSTDGEIPYREGQSIGVIPDGIDKNGKPHKLRLYSIASSAIGDFADSKTVSLCVKRLVYTNDQGEIVKGVCSNFLCDLKPGSDVKITGPVGKEMLMPKDPNATIIMLGTGTGIAPFRSFLWKMFFEEHDDYKFNGLAWLFLGVPTSSTLLYREEFERMKEIAPERFRLDFAVSREQTNAAGEKMYIQTRMAEYKDELWELLKKDNTYVYMCGLKGMEKGIDDIMIDLAAKDGIDWLDYKKQLKKSEQWNVEVY.

The transit peptide at 1 to 48 directs the protein to the chloroplast; that stretch reads MAAVNTVSSLPCSKAGAAVAGGAPRPSTCSVFYPPRCWSKRSSGNGVR. The 123-residue stretch at 87 to 209 folds into the FAD-binding FR-type domain; the sequence is KEPYTGRCLL…TGPVGKEMLM (123 aa). FAD contacts are provided by residues 145-148, 166-168, Tyr172, and 183-185; these read RLYS, CVK, and VCS. Residues Ser148 and Lys168 each coordinate NADP(+). Cys184 and Cys189 are joined by a disulfide. Ser185 bears the Phosphoserine mark. Position 216 is a phosphothreonine (Thr216). Thr224 contributes to the FAD binding site. NADP(+) contacts are provided by residues Thr224, 256–257, 286–287, Lys296, 325–326, and Glu364; these read VP, SR, and GL.

Belongs to the ferredoxin--NADP reductase type 1 family. As to quaternary structure, heterodimer with LFNR1. Component of high molecular weight thylakoid LFNRs-containing protein complexes containing LIR1, LFNR1, LFNR2, TIC62 and TROL proteins. Interacts directly with LIR1 and TIC62; LIR1 increases the affinity of LFNR1 and LFNR2 for TIC62. Requires FAD as cofactor. Post-translationally, may form interchain disulfide bonds with LIR1.

It is found in the plastid. Its subcellular location is the chloroplast stroma. The protein localises to the chloroplast thylakoid membrane. It catalyses the reaction 2 reduced [2Fe-2S]-[ferredoxin] + NADP(+) + H(+) = 2 oxidized [2Fe-2S]-[ferredoxin] + NADPH. It functions in the pathway energy metabolism; photosynthesis. Functionally, plays a key role in regulating the relative amounts of cyclic and non-cyclic electron flow to meet the demands of the plant for ATP and reducing power. The protein is Ferredoxin--NADP reductase, leaf isozyme 2, chloroplastic of Oryza sativa subsp. japonica (Rice).